Here is a 309-residue protein sequence, read N- to C-terminus: Elongation factor Ts (309 aa).

The interval 82–85 is involved in Mg(2+) ion dislocation from EF-Tu; that stretch reads TDFV.

It belongs to the EF-Ts family.

It is found in the cytoplasm. Associates with the EF-Tu.GDP complex and induces the exchange of GDP to GTP. It remains bound to the aminoacyl-tRNA.EF-Tu.GTP complex up to the GTP hydrolysis stage on the ribosome. This Rickettsia bellii (strain OSU 85-389) protein is Elongation factor Ts.